The sequence spans 420 residues: Homeobox-containing protein 1 (420 aa).

Positions Asp18–Thr49 constitute an HNF-p1 domain. The interval Glu56 to Ala139 is disordered. Residue Lys60 forms a Glycyl lysine isopeptide (Lys-Gly) (interchain with G-Cter in SUMO2) linkage. Composition is skewed to low complexity over residues Arg64–Gly73 and Ala81–Gln93. Residues His94–Met132 show a composition bias toward polar residues. Lys131 participates in a covalent cross-link: Glycyl lysine isopeptide (Lys-Gly) (interchain with G-Cter in SUMO2). Residues Arg145–Ala241 form the POU-specific atypical domain. Phosphoserine is present on Ser148. A Glycyl lysine isopeptide (Lys-Gly) (interchain with G-Cter in SUMO2) cross-link involves residue Lys161. Residue Ser170 is modified to Phosphoserine. Glycyl lysine isopeptide (Lys-Gly) (interchain with G-Cter in SUMO2) cross-links involve residues Lys174, Lys217, and Lys310. A DNA-binding region (homeobox) is located at residues Arg267–Ala341. The disordered stretch occupies residues Ile353–Gln385. The span at Asp365–Asp377 shows a compositional bias: acidic residues. Residue Lys413 forms a Glycyl lysine isopeptide (Lys-Gly) (interchain with G-Cter in SUMO1); alternate linkage. Lys413 is covalently cross-linked (Glycyl lysine isopeptide (Lys-Gly) (interchain with G-Cter in SUMO2); alternate).

As to quaternary structure, associates with the telomerase holoenzyme complex. Interacts with DKC1, XRCC6 and COIL. In terms of tissue distribution, ubiquitous. Detected in pancreas, brain, spleen, placenta, prostate, thymus, liver, heart, bone marrow, skeletal muscle, stomach, uterus, testis, kidney, ovary, colon, lung, cardiac muscle and thyroid gland.

Its subcellular location is the nucleus. It is found in the cytoplasm. It localises to the chromosome. The protein localises to the telomere. The protein resides in the cajal body. Its subcellular location is the PML body. Its function is as follows. Binds directly to 5'-TTAGGG-3' repeats in telomeric DNA. Associates with the telomerase complex at sites of active telomere processing and positively regulates telomere elongation. Important for TERT binding to chromatin, indicating a role in recruitment of the telomerase complex to telomeres. Also plays a role in the alternative lengthening of telomeres (ALT) pathway in telomerase-negative cells where it promotes formation and/or maintenance of ALT-associated promyelocytic leukemia bodies (APBs). Enhances formation of telomere C-circles in ALT cells, suggesting a possible role in telomere recombination. Might also be involved in the DNA damage response at telomeres. This Homo sapiens (Human) protein is Homeobox-containing protein 1.